Reading from the N-terminus, the 299-residue chain is Glutamate formimidoyltransferase (299 aa).

Catalysis depends on His82, which acts as the For formimidoyltransferase activity. 163-172 (GDRKIHPTAG) provides a ligand contact to folate.

Belongs to the formiminotransferase family.

It is found in the cytoplasm. The enzyme catalyses (6S)-5-formyl-5,6,7,8-tetrahydrofolate + L-glutamate = N-formyl-L-glutamate + (6S)-5,6,7,8-tetrahydrofolate + H(+). It catalyses the reaction 5-formimidoyltetrahydrofolate + L-glutamate = N-formimidoyl-L-glutamate + (6S)-5,6,7,8-tetrahydrofolate. The catalysed reaction is (6S)-5-formyl-5,6,7,8-tetrahydrofolate + ATP = (6R)-5,10-methenyltetrahydrofolate + ADP + phosphate. It functions in the pathway amino-acid degradation; L-histidine degradation into L-glutamate; L-glutamate from N-formimidoyl-L-glutamate (transferase route): step 1/1. Its pathway is one-carbon metabolism; tetrahydrofolate interconversion. In terms of biological role, catalyzes the transfer of the formyl group from N-formylglutamate to tetrahydrofolate (THF) to yield 5-formyltetrahydrofolate (5-CHO-THF) and glutamate (Glu). The triglutamate form of 5-CHO-THF (5-CHO-THF-Glu3) can also be used as substrate. It can also catalyze the transfer of the formimino group from N-formiminoglutamate to tetrahydrofolate (THF) to yield 5-formiminotetrahydrofolate (5-NH=CH-THF) and glutamate (Glu). It can replace YgfA to catalyze the irreversible ATP-dependent transformation of 5-CHO-THF to form 5,10-methenyltetrahydrofolate (5,10-CH=THF). This Streptococcus pyogenes serotype M1 protein is Glutamate formimidoyltransferase.